The sequence spans 1330 residues: Kinectin (1330 aa).

The Cytoplasmic segment spans residues 1 to 6 (MEFYES). A helical; Signal-anchor for type II membrane protein membrane pass occupies residues 7–29 (TYFIVLIPSVVITVIFLFFWLFM). The Lumenal segment spans residues 30-1330 (KETLYDEVLA…KEKEHYQVLE (1301 aa)). Disordered regions lie at residues 49–81 (PTKTDKKKAEKKKNKKKEIQNGNLHESDSESVP) and 108–218 (SSSV…KQKA). Phosphoserine is present on residues Ser-75 and Ser-77. Residues 113-122 (ERKKKEKKHK) are compositionally biased toward basic residues. Residues 123–135 (PVLEEQVTKESDV) show a composition bias toward basic and acidic residues. Thr-153 carries the post-translational modification Phosphothreonine. At Ser-156 the chain carries Phosphoserine. The segment covering 161 to 171 (SKKKPGQKKSK) has biased composition (basic residues). N-linked (GlcNAc...) asparagine glycans are attached at residues Asn-172, Asn-435, Asn-772, Asn-904, and Asn-1055. A compositionally biased stretch (basic and acidic residues) spans 172–182 (NGSDDQDKKVE). The stretch at 332–1329 (HQLQEKDKLL…TKEKEHYQVL (998 aa)) forms a coiled coil. At Ser-1085 the chain carries Phosphoserine. A glycan (N-linked (GlcNAc...) asparagine) is linked at Asn-1236. Ser-1286 carries the phosphoserine modification. N-linked (GlcNAc...) asparagine glycosylation is present at Asn-1302.

This sequence belongs to the kinectin family. Parallel homodimers formed between the membrane-bound and the cytosolic form, and also between 2 cytosolic forms. As to expression, expressed in male brain, heart, kidney, liver, lung, spleen and testis.

It localises to the endoplasmic reticulum membrane. Its function is as follows. Receptor for kinesin thus involved in kinesin-driven vesicle motility. The polypeptide is Kinectin (KTN1) (Vulpes vulpes (Red fox)).